Here is a 384-residue protein sequence, read N- to C-terminus: Dual-specificity RNA methyltransferase RlmN (384 aa).

Glu105 serves as the catalytic Proton acceptor. A Radical SAM core domain is found at 111-350; it reads EDDRATLCVS…TIVRKTRGDD (240 aa). The cysteines at positions 118 and 355 are disulfide-linked. Residues Cys125, Cys129, and Cys132 each coordinate [4Fe-4S] cluster. Residues 179–180, Ser211, 233–235, and Asn312 each bind S-adenosyl-L-methionine; these read GE and SLH. The active-site S-methylcysteine intermediate is Cys355.

The protein belongs to the radical SAM superfamily. RlmN family. It depends on [4Fe-4S] cluster as a cofactor.

It localises to the cytoplasm. The enzyme catalyses adenosine(2503) in 23S rRNA + 2 reduced [2Fe-2S]-[ferredoxin] + 2 S-adenosyl-L-methionine = 2-methyladenosine(2503) in 23S rRNA + 5'-deoxyadenosine + L-methionine + 2 oxidized [2Fe-2S]-[ferredoxin] + S-adenosyl-L-homocysteine. The catalysed reaction is adenosine(37) in tRNA + 2 reduced [2Fe-2S]-[ferredoxin] + 2 S-adenosyl-L-methionine = 2-methyladenosine(37) in tRNA + 5'-deoxyadenosine + L-methionine + 2 oxidized [2Fe-2S]-[ferredoxin] + S-adenosyl-L-homocysteine. Its function is as follows. Specifically methylates position 2 of adenine 2503 in 23S rRNA and position 2 of adenine 37 in tRNAs. m2A2503 modification seems to play a crucial role in the proofreading step occurring at the peptidyl transferase center and thus would serve to optimize ribosomal fidelity. In Shigella boydii serotype 18 (strain CDC 3083-94 / BS512), this protein is Dual-specificity RNA methyltransferase RlmN.